Here is a 399-residue protein sequence, read N- to C-terminus: Polypyrimidine tract-binding protein homolog 1 (399 aa).

The residue at position 2 (S2) is an N-acetylserine. 3 consecutive RRM domains span residues 17–95 (KVVH…YSNR), 109–196 (GNVL…YSAH), and 242–322 (SNVL…YSRH). Residues 352-399 (AVSGSAPPAGWQNPQAQSQYSGYGGSPYMYPSSDPNGASPSGQPPYYG) form a disordered region. A compositionally biased stretch (low complexity) spans 365–384 (PQAQSQYSGYGGSPYMYPSS).

The protein resides in the nucleus. Functionally, plays a role in pre-mRNA splicing. Binds to the polypyrimidine tract of introns. May promote the binding of U2 snRNP to pre-mRNA. The sequence is that of Polypyrimidine tract-binding protein homolog 1 (PTB) from Arabidopsis thaliana (Mouse-ear cress).